Reading from the N-terminus, the 139-residue chain is Transcription antitermination protein NusB (139 aa).

It belongs to the NusB family.

Its function is as follows. Involved in transcription antitermination. Required for transcription of ribosomal RNA (rRNA) genes. Binds specifically to the boxA antiterminator sequence of the ribosomal RNA (rrn) operons. The protein is Transcription antitermination protein NusB of Sodalis glossinidius (strain morsitans).